A 368-amino-acid chain; its full sequence is Queuine tRNA-ribosyltransferase (368 aa).

The active-site Proton acceptor is D89. Substrate contacts are provided by residues 89-93, D143, and G216; that span reads DSGGF. The tract at residues 247–253 is RNA binding; that stretch reads GVGKPED. D266 acts as the Nucleophile in catalysis. The segment at 271–275 is RNA binding; important for wobble base 34 recognition; sequence TRNAR. The Zn(2+) site is built by C304, C306, C309, and H335.

This sequence belongs to the queuine tRNA-ribosyltransferase family. As to quaternary structure, homodimer. Within each dimer, one monomer is responsible for RNA recognition and catalysis, while the other monomer binds to the replacement base PreQ1. It depends on Zn(2+) as a cofactor.

The catalysed reaction is 7-aminomethyl-7-carbaguanine + guanosine(34) in tRNA = 7-aminomethyl-7-carbaguanosine(34) in tRNA + guanine. Its pathway is tRNA modification; tRNA-queuosine biosynthesis. In terms of biological role, catalyzes the base-exchange of a guanine (G) residue with the queuine precursor 7-aminomethyl-7-deazaguanine (PreQ1) at position 34 (anticodon wobble position) in tRNAs with GU(N) anticodons (tRNA-Asp, -Asn, -His and -Tyr). Catalysis occurs through a double-displacement mechanism. The nucleophile active site attacks the C1' of nucleotide 34 to detach the guanine base from the RNA, forming a covalent enzyme-RNA intermediate. The proton acceptor active site deprotonates the incoming PreQ1, allowing a nucleophilic attack on the C1' of the ribose to form the product. After dissociation, two additional enzymatic reactions on the tRNA convert PreQ1 to queuine (Q), resulting in the hypermodified nucleoside queuosine (7-(((4,5-cis-dihydroxy-2-cyclopenten-1-yl)amino)methyl)-7-deazaguanosine). This chain is Queuine tRNA-ribosyltransferase, found in Buchnera aphidicola subsp. Schizaphis graminum (strain Sg).